A 429-amino-acid polypeptide reads, in one-letter code: MPAIVIVGAQWGDEGKGKATDLLGGRVDYVVKPNGGNNAGHTVVVGGEKYELKLLPAGILSPNAIPIIGNGCVVNLEALFQEIDGLEARGADTSRLRVSANAHLVAPYHQVLDKVTERFLGSRAIGTTGRGIGPAYMDKVARLGIRVQDVFDESILRQKVEGSLRQKNELLVKVYNRRDIIADEIVEYFLSFAERLRPLVIDSTLELNNALDEGKVVLMEGGQATFLDVDHGTYPFVTSSNPTAGGASVGSGIGPTRISRSIGIIKAYTTRVGAGPFPTELFDEMGVYLQKTGGEFGVNTGRPRRCGWYDAVLARHASRVNGFTDYFVTKLDVLTGIEQIPVCVAYDVDGVRHDEMPMTQTEFHHAVPIFEYFDGWTEDITGARTLEDLPENARNYVLALEKLSGTRFSAIGVGPDRDQTIVVHDLIND.

Residues 12 to 18 and 40 to 42 each bind GTP; these read GDEGKGK and GHT. The active-site Proton acceptor is the aspartate 13. Positions 13 and 40 each coordinate Mg(2+). Residues 13 to 16, 38 to 41, threonine 128, arginine 142, glutamine 223, threonine 238, and arginine 302 each bind IMP; these read DEGK and NAGH. Catalysis depends on histidine 41, which acts as the Proton donor. 298–304 contributes to the substrate binding site; the sequence is VNTGRPR. GTP is bound by residues arginine 304, 330-332, and 412-414; these read KLD and GVG.

Belongs to the adenylosuccinate synthetase family. In terms of assembly, homodimer. Mg(2+) is required as a cofactor.

It localises to the cytoplasm. The catalysed reaction is IMP + L-aspartate + GTP = N(6)-(1,2-dicarboxyethyl)-AMP + GDP + phosphate + 2 H(+). Its pathway is purine metabolism; AMP biosynthesis via de novo pathway; AMP from IMP: step 1/2. Its function is as follows. Plays an important role in the de novo pathway of purine nucleotide biosynthesis. Catalyzes the first committed step in the biosynthesis of AMP from IMP. The protein is Adenylosuccinate synthetase of Paenarthrobacter aurescens (strain TC1).